Here is a 369-residue protein sequence, read N- to C-terminus: Methionine import ATP-binding protein MetN 1 (369 aa).

Residues 29–265 enclose the ABC transporter domain; it reads IRLHGLGKRY…PRHAVTRSLL (237 aa). Position 62 to 69 (62 to 69) interacts with ATP; the sequence is GRSGAGKS.

Belongs to the ABC transporter superfamily. Methionine importer (TC 3.A.1.24) family. In terms of assembly, the complex is composed of two ATP-binding proteins (MetN), two transmembrane proteins (MetI) and a solute-binding protein (MetQ).

Its subcellular location is the cell inner membrane. The enzyme catalyses L-methionine(out) + ATP + H2O = L-methionine(in) + ADP + phosphate + H(+). The catalysed reaction is D-methionine(out) + ATP + H2O = D-methionine(in) + ADP + phosphate + H(+). Functionally, part of the ABC transporter complex MetNIQ involved in methionine import. Responsible for energy coupling to the transport system. The protein is Methionine import ATP-binding protein MetN 1 of Pseudomonas aeruginosa (strain ATCC 15692 / DSM 22644 / CIP 104116 / JCM 14847 / LMG 12228 / 1C / PRS 101 / PAO1).